The chain runs to 77 residues: uncharacterized protein (77 aa).

Positions 56–77 (SVIPKQQPPSSAAAISESEFED) are disordered. A compositionally biased stretch (low complexity) spans 65-77 (SSAAAISESEFED).

This is an uncharacterized protein from Frog virus 3 (isolate Goorha) (FV-3).